The sequence spans 306 residues: D-alanine--D-alanine ligase B (306 aa).

Active-site residues include Glu15 and Ser150. Residues 101–303 (KLLWQGAGLP…FSQLVVRILE (203 aa)) enclose the ATP-grasp domain. 134–189 (ISSLGLPVIVKPSREGSSVGMSKVVAENALQDALRLAFQHDEEVLIEKWLSGPEFT) contributes to the ATP binding site. Positions 257, 270, and 272 each coordinate Mg(2+). Ser281 is an active-site residue.

Belongs to the D-alanine--D-alanine ligase family. As to quaternary structure, monomer. Mg(2+) is required as a cofactor. The cofactor is Mn(2+).

Its subcellular location is the cytoplasm. It carries out the reaction 2 D-alanine + ATP = D-alanyl-D-alanine + ADP + phosphate + H(+). The protein operates within cell wall biogenesis; peptidoglycan biosynthesis. Functionally, cell wall formation. The protein is D-alanine--D-alanine ligase B of Escherichia coli O6:H1 (strain CFT073 / ATCC 700928 / UPEC).